A 420-amino-acid chain; its full sequence is MIOREX complex component 9 (420 aa).

2 consecutive transmembrane segments (helical) span residues 125-145 and 149-169; these read VYKV…TFIL and IVVI…FFFF.

As to quaternary structure, associates with the mitochondrial ribosome.

Its subcellular location is the mitochondrion. It is found in the mitochondrion membrane. Its function is as follows. Component of MIOREX complexes, large expressome-like assemblies of ribosomes with factors involved in all the steps of post-transcriptional gene expression. The protein is MIOREX complex component 9 of Saccharomyces cerevisiae (strain ATCC 204508 / S288c) (Baker's yeast).